Here is a 217-residue protein sequence, read N- to C-terminus: Dephospho-CoA kinase (217 aa).

A DPCK domain is found at 2-217; that stretch reads VIGLTGGIAS…RELARIEEQK (216 aa). 10 to 15 is a binding site for ATP; sequence ASGKST.

The protein belongs to the CoaE family.

The protein resides in the cytoplasm. The catalysed reaction is 3'-dephospho-CoA + ATP = ADP + CoA + H(+). The protein operates within cofactor biosynthesis; coenzyme A biosynthesis; CoA from (R)-pantothenate: step 5/5. In terms of biological role, catalyzes the phosphorylation of the 3'-hydroxyl group of dephosphocoenzyme A to form coenzyme A. The sequence is that of Dephospho-CoA kinase from Lactococcus lactis subsp. lactis (strain IL1403) (Streptococcus lactis).